A 179-amino-acid chain; its full sequence is Large ribosomal subunit protein uL5 (179 aa).

It belongs to the universal ribosomal protein uL5 family. As to quaternary structure, part of the 50S ribosomal subunit; part of the 5S rRNA/L5/L18/L25 subcomplex. Contacts the 5S rRNA and the P site tRNA. Forms a bridge to the 30S subunit in the 70S ribosome.

Its function is as follows. This is one of the proteins that bind and probably mediate the attachment of the 5S RNA into the large ribosomal subunit, where it forms part of the central protuberance. In the 70S ribosome it contacts protein S13 of the 30S subunit (bridge B1b), connecting the 2 subunits; this bridge is implicated in subunit movement. Contacts the P site tRNA; the 5S rRNA and some of its associated proteins might help stabilize positioning of ribosome-bound tRNAs. This is Large ribosomal subunit protein uL5 from Burkholderia multivorans (strain ATCC 17616 / 249).